The chain runs to 90 residues: DNA-binding protein HU-beta (90 aa).

The protein belongs to the bacterial histone-like protein family. Heterodimer of an alpha and a beta chain.

Functionally, histone-like DNA-binding protein which is capable of wrapping DNA to stabilize it, and thus to prevent its denaturation under extreme environmental conditions. In Pseudomonas aeruginosa (strain ATCC 15692 / DSM 22644 / CIP 104116 / JCM 14847 / LMG 12228 / 1C / PRS 101 / PAO1), this protein is DNA-binding protein HU-beta (hupB).